A 360-amino-acid polypeptide reads, in one-letter code: Putative FBD-associated F-box protein At5g56430 (360 aa).

Positions 1–53 (MRNISDLPNDLLVKILSLIPIKVAASTSLLSKRWGSVWKLIPTLDYDGTYSAA) constitute an F-box domain. Kelch repeat units lie at residues 140 to 186 (IRYT…EQLD) and 235 to 285 (VMCS…SVPE). The FBD domain occupies 276 to 326 (KWEQPNSVPECLLVSLETVKWILYKGTQEEKDVVKYLLKNGNFIKTMSIRF).

The protein is Putative FBD-associated F-box protein At5g56430 of Arabidopsis thaliana (Mouse-ear cress).